We begin with the raw amino-acid sequence, 370 residues long: Peptidyl-prolyl cis-trans isomerase D (370 aa).

Residue S5 is modified to Phosphoserine. The PPIase cyclophilin-type domain occupies 19–183 (FFDVDIGGER…KLCVIAECGE (165 aa)). At K171 the chain carries N6-acetyllysine. The tract at residues 185–215 (KEGDDWGIFPKDGSGDSHPDFPEDADVDLKD) is chaperone activity. Phosphoserine is present on S198. The interval 214–370 (KDVDKILLIS…EKAAYAKMFA (157 aa)) is interaction with HSP90AB1. TPR repeat units lie at residues 223–256 (SEDLKNIGNTFFKSQNWEMAIKKYTKVLRYVEGS), 273–306 (LSCVLNIGACKLKMSDWQGAVDSCLEALEIDPSN), and 307–340 (TKALYRRAQGWQGLKEYDQALADLKKAQEIAPED).

This sequence belongs to the cyclophilin-type PPIase family. PPIase D subfamily. As to quaternary structure, identified in ESR1 or NR3C1/GCR steroid receptor-chaperone complexes. Found in HSP90 chaperone complexes with kinase clients LCK or EIF2AK1. Two monomers associate with one HSP90 homodimer. Interacts with HSP90AA1. Interacts with HSP90AB1; PPID and FKBP4 compete for binding to HSP90AB1 and the interaction is mutually exclusive with the PPID:HSPA8 interaction. Interacts with HSPA8; PPID and STIP1 but not FKBP4 compete for binding to HSPA8 and the interaction is mutually exclusive with the PPID:HSP90AB1 interaction. Interacts with S100A1 and S100A2; the interactions dissociate the PPID:HSP90AA1 interaction. Interacts with S100A6. Interacts with MYB, ILF2, XRCC6, RACK1 and RPS3. Interacts with cytoplasmic dynein 1 intermediate chain (DYNC1I1 or DYNC1I2). Post-translationally, the N-terminus is blocked. In terms of tissue distribution, detected in heart, thymis and brain.

It is found in the cytoplasm. The protein resides in the nucleus. It localises to the nucleolus. The protein localises to the nucleoplasm. The catalysed reaction is [protein]-peptidylproline (omega=180) = [protein]-peptidylproline (omega=0). With respect to regulation, less sensitive to inhibition by cyclosporin A than is CYP-18. PPIase that catalyzes the cis-trans isomerization of proline imidic peptide bonds in oligopeptides and may therefore assist protein folding. Proposed to act as a co-chaperone in HSP90 complexes such as in unligated steroid receptors heterocomplexes. Different co-chaperones seem to compete for association with HSP90 thus establishing distinct HSP90-co-chaperone-receptor complexes with the potential to exert tissue-specific receptor activity control. May have a preference for estrogen receptor complexes and is not found in glucocorticoid receptor complexes. May be involved in cytoplasmic dynein-dependent movement of the receptor from the cytoplasm to the nucleus. May regulate MYB by inhibiting its DNA-binding activity. Involved in regulation of AHR signaling by promoting the formation of the AHR:ARNT dimer; the function is independent of HSP90 but requires the chaperone activity. Involved in regulation of UV radiation-induced apoptosis. The protein is Peptidyl-prolyl cis-trans isomerase D of Bos taurus (Bovine).